Reading from the N-terminus, the 63-residue chain is Large ribosomal subunit protein bL32 (63 aa).

Belongs to the bacterial ribosomal protein bL32 family.

The polypeptide is Large ribosomal subunit protein bL32 (rpmF) (Aquifex aeolicus (strain VF5)).